The chain runs to 530 residues: Autoinducer-2 kinase (530 aa).

Belongs to the FGGY kinase family.

The protein resides in the cytoplasm. The catalysed reaction is (S)-4,5-dihydroxypentane-2,3-dione + ATP = (2S)-2-hydroxy-3,4-dioxopentyl phosphate + ADP + H(+). Functionally, catalyzes the phosphorylation of autoinducer-2 (AI-2) to phospho-AI-2, which subsequently inactivates the transcriptional regulator LsrR and leads to the transcription of the lsr operon. Phosphorylates the ring-open form of (S)-4,5-dihydroxypentane-2,3-dione (DPD), which is the precursor to all AI-2 signaling molecules, at the C5 position. In Photorhabdus laumondii subsp. laumondii (strain DSM 15139 / CIP 105565 / TT01) (Photorhabdus luminescens subsp. laumondii), this protein is Autoinducer-2 kinase.